The chain runs to 273 residues: Diadenylate cyclase (273 aa).

3 helical membrane passes run 12–32 (LANI…IMLI), 37–57 (AVQL…SGFF), and 61–81 (TVEW…IIIF). One can recognise a DAC domain in the interval 82 to 242 (QPELRRALET…GGELFRDVSE (161 aa)).

Belongs to the adenylate cyclase family. DacA/CdaA subfamily. In terms of assembly, probably a homodimer.

The protein localises to the cell membrane. It carries out the reaction 2 ATP = 3',3'-c-di-AMP + 2 diphosphate. Catalyzes the condensation of 2 ATP molecules into cyclic di-AMP (c-di-AMP), a signaling compound secreted into the host's cytosol where it triggers the cytosolic surveillance pathway (CSP), a host pathway of innate immunity characterized by expression of beta interferon (IFN-beta) and coregulated genes. Overexpression increases export of c-di-AMP. c-di-AMP is a second messenger that mediates growth, cell wall stability and virulence. This is Diadenylate cyclase from Listeria monocytogenes serotype 1/2a (strain 10403S).